Reading from the N-terminus, the 207-residue chain is Protein GrpE (207 aa).

The segment covering 1–11 has biased composition (basic and acidic residues); sequence MTETDGQKDNN. The segment at 1 to 39 is disordered; that stretch reads MTETDGQKDNNQDTAQAAADPVVSKPYIMPDDPEEGSNE.

It belongs to the GrpE family. In terms of assembly, homodimer.

It localises to the cytoplasm. In terms of biological role, participates actively in the response to hyperosmotic and heat shock by preventing the aggregation of stress-denatured proteins, in association with DnaK and GrpE. It is the nucleotide exchange factor for DnaK and may function as a thermosensor. Unfolded proteins bind initially to DnaJ; upon interaction with the DnaJ-bound protein, DnaK hydrolyzes its bound ATP, resulting in the formation of a stable complex. GrpE releases ADP from DnaK; ATP binding to DnaK triggers the release of the substrate protein, thus completing the reaction cycle. Several rounds of ATP-dependent interactions between DnaJ, DnaK and GrpE are required for fully efficient folding. In Rhodopseudomonas palustris (strain TIE-1), this protein is Protein GrpE.